The chain runs to 1990 residues: MFRNSLKMLLTGGKSSRKNRSSDGGSEEPPDRRQSSVDSRQSRSGQGGISTESDCAFEPDYAVPPLPVSEGDAEQELGPPPSVDEAANTLMTRLGFLLGEKVTEVQPGDQYSMEVQDENQTSAITQRISPCSTLTSSTASPPASSPCSTLPPISTNATAKDCSYGAVTSPTSTLESRDSGIIATLTSYSENVERTKYAGESSKELGSGGNIKPWQSQKSSMDSCLYRVDENMTASTYSLNKIPERNLETVLSQSVQSIPLYLMPRPNSVAATSSAHLEDLAYLDEQRHTPLRTSLRMPRQSMGGARTQQDLRVRFAPYRPPDISLKPLLFEVPSITTESVFVGRDWVFHEIDAQLQSSNASVNQGVVIVGNIGFGKTAIISRLVALSCHGTRMRQIASDSPHASPKHVDANRELPLTQPPSAHSSITSGSCPGTPEMRRRQEEAMRRLASQVVAYHYCQADNAYTCLVPEFVHNVAALLCRSPQLTAYREQLLREPHLQSMLSLRSCVQDPMASFRRGVLEPLENLHKERKIPDEDFIILIDGLNEAEFHKPDYGDTIVSFLSKMIGKFPSWLKLIVTVRTSLQEITKLLPFHRIFLDRLEENEAIDQDLQAYILHRIHSSSEIQNNISLNGKMDNTTFGKLSSHLKTLSQGSYLYLKLTFDLIEKGYLVLKSSSYKVVPVSLSEVYLLQCNMKFPTQSSFDRVMPLLNVAVASLHPLTDEHIFQAINAGSIEGTLEWEDFQQRMENLSMFLIKRRDMTRMFVHPSFREWLIWREEGEKTKFLCDPRSGHTLLAFWFSRQEGKLNRQQTIELGHHILKAHIFKGLSKKVGVSSSILQGLWISYSTEGLSMALASLRNLYTPNIKVSRLLILGGANINYRTEVLNNAPILCVQSHLGYTEMVALLLEFGANVDASSESGLTPLGYAAAAGYLSIVVLLCKKRAKVDHLDKNGQCALVHAALRGHLEVVKFLIQCDWTMAGQQQGVFKKSHAIQQALIAAASMGYTEIVSYLLDLPEKDEEEVERAQINSFDSLWGETALTAAAGRGKLEVCRLLLEQGAAVAQPNRRGAVPLFSTVRQGHWQIVDLLLTHGADVNMADKQGRTPLMMAASEGHLGTVDFLLAQGASIALMDKEGLTALSWACLKGHLSVVRSLVDNGAATDHADKNGRTPLDLAAFYGDAEVVQFLVDHGAMIEHVDYSGMRPLDRAVGCRNTSVVVTLLKKGAKIGPATWAMATSKPDIMIILLSKLMEEGDMFYKKGKVKEAAQRYQYALKKFPREGFGEDLKTFRELKVSLLLNLSRCRRKMNDFGMAEEFATKALELKPKSYEAYYARARAKRSSRQFAAALEDLNEAIKLCPNNREIQRLLLRVEEECRQMQQPQQPPPPPQPQQQLPEEAEPEPQHEDIYSVQDIFEEEYLEQDVENVSIGLQTEARPSQGLPVIQSPPSSPPHRDSAYISSSPLGSHQVFDFRSSSSVGSPTRQTYQSTSPALSPTHQNSHYRPSPPHTSPAHQGGSYRFSPPPVGGQGKEYPSPPPSPLRRGPQYRASPPAESMSVYRSQSGSPVRYQQETSVSQLPGRPKSPLSKMAQRPYQMPQLPVAVPQQGLRLQPAKAQIVRSNQPSPAVHSSTVIPTGAYGQVAHSMASKYQSSQGDIGVSQSRLVYQGSIGGIVGDGRPVQHVQASLSAGAICQHGGLTKEDLPQRPSSAYRGGVRYSQTPQIGRSQSASYYPVCHSKLDLERSSSQLGSPDVSHLIRRPISVNPNEIKPHPPTPRPLLHSQSVGLRFSPSSNSISSTSNLTPTFRPSSSIQQMEIPLKPAYERSCDELSPVSPTQGGYPSEPTRSRTTPFMGIIDKTARTQQYPHLHQQNRTWAVSSVDTVLSPTSPGNLPQPESFSPPSSISNIAFYNKTNNAQNGHLLEDDYYSPHGMLANGSRGDLLERVSQASSYPDVKVARTLPVAQAYQDNLYRQLSRDSRQGQTSPIKPKRPFVESNV.

2 disordered regions span residues 1–85 (MFRN…SVDE) and 129–149 (SPCSTLTSSTASPPASSPCST). Ser169, Ser238, Ser294, and Ser400 each carry phosphoserine. Positions 396-442 (IASDSPHASPKHVDANRELPLTQPPSAHSSITSGSCPGTPEMRRRQE) are disordered. Residues 419–431 (PPSAHSSITSGSC) show a composition bias toward polar residues. 11 ANK repeats span residues 846-878 (EGLSMALASLRNLYTPNIKVSRLLILGGANINY), 884-913 (NNAPILCVQSHLGYTEMVALLLEFGANVDA), 917-946 (SGLTPLGYAAAAGYLSIVVLLCKKRAKVDH), 950-979 (NGQCALVHAALRGHLEVVKFLIQCDWTMAG), 990-1019 (AIQQALIAAASMGYTEIVSYLLDLPEKDEE), 1033-1062 (WGETALTAAAGRGKLEVCRLLLEQGAAVAQ), 1066-1095 (RGAVPLFSTVRQGHWQIVDLLLTHGADVNM), 1099-1128 (QGRTPLMMAASEGHLGTVDFLLAQGASIAL), 1132-1161 (EGLTALSWACLKGHLSVVRSLVDNGAATDH), 1165-1194 (NGRTPLDLAAFYGDAEVVQFLVDHGAMIEH), and 1198-1227 (SGMRPLDRAVGCRNTSVVVTLLKKGAKIGP). 3 TPR repeats span residues 1244–1277 (LSKLMEEGDMFYKKGKVKEAAQRYQYALKKFPRE), 1291–1324 (VSLLLNLSRCRRKMNDFGMAEEFATKALELKPKS), and 1325–1358 (YEAYYARARAKRSSRQFAAALEDLNEAIKLCPNN). Disordered regions lie at residues 1372–1401 (CRQMQQPQQPPPPPQPQQQLPEEAEPEPQH), 1430–1586 (EARP…KMAQ), and 1692–1718 (LTKEDLPQRPSSAYRGGVRYSQTPQIG). Phosphoserine occurs at positions 1442 and 1458. Residues 1469-1498 (RSSSSVGSPTRQTYQSTSPALSPTHQNSHY) are compositionally biased toward polar residues. Phosphoserine occurs at positions 1530 and 1545. The segment covering 1553 to 1572 (VYRSQSGSPVRYQQETSVSQ) has biased composition (polar residues). Asymmetric dimethylarginine occurs at positions 1563 and 1576. A Phosphoserine modification is found at Ser1579. Ser1722 is subject to Phosphoserine. Over residues 1783–1798 (SPSSNSISSTSNLTPT) the composition is skewed to low complexity. Disordered regions lie at residues 1783–1803 (SPSSNSISSTSNLTPTFRPSS) and 1821–1843 (DELSPVSPTQGGYPSEPTRSRTT). Phosphoserine is present on residues Ser1824 and Ser1827. N-linked (GlcNAc...) asparagine glycosylation occurs at Asn1928. The segment at 1968–1990 (SRDSRQGQTSPIKPKRPFVESNV) is disordered.

This sequence belongs to the TANC family. As to quaternary structure, interacts with KIF1A; the interaction decreases in presence of calcium.

The protein resides in the cell projection. It is found in the dendritic spine. Functionally, scaffolding protein in the dendritic spines which acts as immobile postsynaptic posts able to recruit KIF1A-driven dense core vesicles to dendritic spines. In Homo sapiens (Human), this protein is Protein TANC2 (TANC2).